The sequence spans 399 residues: Phosphoglycerate kinase (399 aa).

Substrate is bound by residues 22 to 24 (DFN), arginine 38, 61 to 64 (HLGR), arginine 119, and arginine 152. Residues lysine 205, glycine 296, glutamate 327, and 353 to 356 (GGDT) each bind ATP.

This sequence belongs to the phosphoglycerate kinase family. Monomer.

The protein resides in the cytoplasm. The catalysed reaction is (2R)-3-phosphoglycerate + ATP = (2R)-3-phospho-glyceroyl phosphate + ADP. It functions in the pathway carbohydrate degradation; glycolysis; pyruvate from D-glyceraldehyde 3-phosphate: step 2/5. In Nitratiruptor sp. (strain SB155-2), this protein is Phosphoglycerate kinase.